A 602-amino-acid polypeptide reads, in one-letter code: Beta-(1--&gt;2)glucan export ATP-binding/permease protein NdvA (602 aa).

The ABC transmembrane type-1 domain occupies 21–306; that stretch reads GWLLAFANLL…VVSFINNVFM (286 aa). 6 helical membrane-spanning segments follow: residues 22–42, 63–83, 141–161, 163–183, 240–262, and 280–300; these read WLLA…PVLF, FLAA…LVAL, EHFA…YLNW, LAIL…FVVR, VLSW…VLAI, and IVMF…VVSF. The region spanning 340–573 is the ABC transporter domain; the sequence is VEFNDVTFSY…GGHFAELARA (234 aa). 373–380 is a binding site for ATP; the sequence is GPTGAGKS.

It belongs to the ABC transporter superfamily. Beta-(1--&gt;2)glucan exporter (TC 3.A.1.108.1) family. Homodimer.

Its subcellular location is the cell inner membrane. It catalyses the reaction [(1-&gt;2)-beta-D-glucosyl](n)(in) + ATP + H2O = [(1-&gt;2)-beta-D-glucosyl](n)(out) + ADP + phosphate + H(+). Its function is as follows. Involved in beta-(1--&gt;2)glucan export. Transmembrane domains (TMD) form a pore in the inner membrane and the ATP-binding domain (NBD) is responsible for energy generation. The polypeptide is Beta-(1--&gt;2)glucan export ATP-binding/permease protein NdvA (Bradyrhizobium diazoefficiens (strain JCM 10833 / BCRC 13528 / IAM 13628 / NBRC 14792 / USDA 110)).